We begin with the raw amino-acid sequence, 873 residues long: DNA mismatch repair protein PMS1 (873 aa).

A DNA- and ATP-binding region spans residues 1–357; it reads MTQIHQINDI…FKTTLSDYYN (357 aa). Residues 379-402 show a composition bias toward basic and acidic residues; it reads LKTEVFDDRSTTHESDNENYHTAR. The interval 379–423 is disordered; that stretch reads LKTEVFDDRSTTHESDNENYHTARSESNQSNHAHFNSTTGVIDKS. Serine 393 is modified (phosphoserine). Over residues 403–423 the composition is skewed to polar residues; the sequence is SESNQSNHAHFNSTTGVIDKS. The residue at position 566 (serine 566) is a Phosphoserine. The interaction with MLH1 stretch occupies residues 661–873; that stretch reads YLTLTVSKND…WSSFSKDYEI (213 aa).

It belongs to the DNA mismatch repair MutL/HexB family. Heterodimer of MLH1 and PMS1, called MutLalpha, which is the major MMR MutL activity correcting base-base mismatches as well as IDLs. The heterodimer binds double strand DNA independently of a mismatch with positive cooperativity and has more than one DNA binding site. Forms a ternary complex with either the MSH2-MSH6 (MutSalpha) or the MSH2-MSH3 heterodimer (MutSbeta), which recognize and bind to mismatch DNA. Ternary complex formation is promoted by ATP binding.

The protein resides in the nucleus. Functionally, required for DNA mismatch repair (MMR), correcting base-base mismatches and insertion-deletion loops (IDLs) resulting from DNA replication, DNA damage or from recombination events between non-identical sequences during meiosis. Component of the MutLalpha heterodimer that forms a ternary complex with the MutS heterodimers, which initially recognize the DNA mismatches. This complex is thought to be responsible for directing the downstream MMR events, including strand discrimination, excision, and resynthesis. Plays a major role in maintaining the genetic stability of simple sequence repeats and in the repair of heteroduplex sites present in meiotic recombination intermediates. The chain is DNA mismatch repair protein PMS1 (PMS1) from Saccharomyces cerevisiae (strain ATCC 204508 / S288c) (Baker's yeast).